Reading from the N-terminus, the 504-residue chain is MYIPNLRNYHDKVFPYGPSSNGYNPVIRLTDRTTQPDPSQHIYQEEKISKCEGLSYRAREWLLLSSNSNARVAIALAEPVLYLPGATSSEIQSEHSAVLRGSLCIQIYKPVKLKKIQLSFKGKSRTEWPEGIPPKLFDTYEENSIMNHCWVFFHSEQKVDENSHGAVWYKVLPHYADTAHYPRSMECFYPGEYVYNFELPISCTYPESIQTDMGRVYYFLETLVDRSSTFSGKSTGRIPIELIRSPCSTSVATSEPILVSKSWEDRLHYEVQVGEKCVVMGQVVPVNFKFTLLGEVKFHKLRLFLMERRYYYCRQRSVRRKEKTRQLLLYERSAPKNQCLLSDWKQVRPDVYELSDQVRIPGCHDMAANIVHFDTTYPNIKITHTVRTVLRFSCENSPELMGSAKYLEIYIDSPVRLLSCRCSDGSTMLPAYCPIIPSSEVNFCSIDNRIIAGMNRDLALDSDIIGNSPPSFDSWTAVPYQAPPPKYDDIFQSGSSHDENHDDN.

The tract at residues 481–504 (QAPPPKYDDIFQSGSSHDENHDDN) is disordered.

This sequence belongs to the ALY1 family.

May regulate endocytosis in response to extracellular stimuli. This chain is Putative arrestin-related trafficking adapter SPBC839.02, found in Schizosaccharomyces pombe (strain 972 / ATCC 24843) (Fission yeast).